We begin with the raw amino-acid sequence, 325 residues long: E3 ubiquitin-protein ligase SIAH2 (325 aa).

Positions Met-1–Cys-15 are enriched in polar residues. A disordered region spans residues Met-1–Gly-43. At Ser-6 the chain carries Phosphoserine. Ser-16 bears the Phosphoserine; by DYRK2 mark. Residues Lys-17–Pro-33 are compositionally biased toward pro residues. A Phosphothreonine; by MAPK14 modification is found at Thr-24. The residue at position 29 (Ser-29) is a Phosphoserine; by DYRK2 and MAPK14. Positions Pro-34–Gly-43 are enriched in low complexity. Ser-69 bears the Phosphoserine; by DYRK2 mark. The RING-type zinc-finger motif lies at Cys-81–Arg-116. Thr-120 is modified (phosphothreonine; by DYRK2). The SBD stretch occupies residues Val-131–Cys-323. The SIAH-type zinc finger occupies Ala-134 to Lys-194. Residues Cys-139, Cys-146, His-158, Cys-162, Cys-169, Cys-176, His-188, and His-193 each coordinate Zn(2+).

This sequence belongs to the SINA (Seven in absentia) family. As to quaternary structure, homodimer. Interacts with VAV1, without mediating its ubiquitin-mediated degradation. Probable component of some large E3 complex possibly composed of UBE2D1, SIAH2, CACYBP/SIP, SKP1, APC and TBL1X. Interacts with UBE2I. Interacts with UBE2E2. Interacts with PEG10, which may inhibit its activity. Interacts with PEG3 and EGLN2. Interacts with DYRK2. Interacts with SNCAIP. Interacts with NR1D1 and NR1D2. Interacts with DCC. Interacts with AXIN1. Post-translationally, phosphorylated at Thr-24 and Ser-29 by MAPK14, which mediates the degradation by the proteasome of EGLN3. Phosphorylated at Ser-29 by DYRK2; this increases the ubiquitin ligase activity and promotes degradation of EGLN3. In terms of tissue distribution, detected in brain (at protein level).

The protein localises to the cytoplasm. The protein resides in the nucleus. The catalysed reaction is S-ubiquitinyl-[E2 ubiquitin-conjugating enzyme]-L-cysteine + [acceptor protein]-L-lysine = [E2 ubiquitin-conjugating enzyme]-L-cysteine + N(6)-ubiquitinyl-[acceptor protein]-L-lysine.. It functions in the pathway protein modification; protein ubiquitination. Its function is as follows. E3 ubiquitin-protein ligase that mediates ubiquitination and subsequent proteasomal degradation of target proteins. E3 ubiquitin ligases accept ubiquitin from an E2 ubiquitin-conjugating enzyme in the form of a thioester and then directly transfers the ubiquitin to targeted substrates. Mediates E3 ubiquitin ligase activity either through direct binding to substrates or by functioning as the essential RING domain subunit of larger E3 complexes. Mediates ubiquitination and proteasomal degradation of DYRK2 in response to hypoxia. Promotes monoubiquitination of SNCA. Triggers the ubiquitin-mediated degradation of many substrates, including proteins involved in transcription regulation (GPS2, POU2AF1, PML, NCOR1), a cell surface receptor (DCC), an antiapoptotic protein (BAG1), and a protein involved in synaptic vesicle function in neurons (SYP). It is thereby involved in apoptosis, tumor suppression, cell cycle, transcription and signaling processes. Has some overlapping function with SIAH1. Triggers the ubiquitin-mediated degradation of TRAF2, whereas SIAH1 does not. Regulates cellular clock function via ubiquitination of circadian transcriptional repressors NR1D1 and NR1D2 leading to their proteasomal degradation. Plays an important role in mediating the rhythmic degradation/clearance of NR1D1 and NR1D2 contributing to their circadian profile of protein abundance. Mediates ubiquitination and degradation of EGLN2 and EGLN3 in response to the unfolded protein response (UPR), leading to their degradation and subsequent stabilization of ATF4. Also part of the Wnt signaling pathway in which it mediates the Wnt-induced ubiquitin-mediated proteasomal degradation of AXIN1. The sequence is that of E3 ubiquitin-protein ligase SIAH2 (Siah2) from Rattus norvegicus (Rat).